The primary structure comprises 159 residues: Ribosomal RNA large subunit methyltransferase H (159 aa).

Residues leucine 76, glycine 107, and 126 to 131 each bind S-adenosyl-L-methionine; that span reads LSKLTM.

It belongs to the RNA methyltransferase RlmH family. As to quaternary structure, homodimer.

The protein resides in the cytoplasm. It carries out the reaction pseudouridine(1915) in 23S rRNA + S-adenosyl-L-methionine = N(3)-methylpseudouridine(1915) in 23S rRNA + S-adenosyl-L-homocysteine + H(+). In terms of biological role, specifically methylates the pseudouridine at position 1915 (m3Psi1915) in 23S rRNA. This Acinetobacter baylyi (strain ATCC 33305 / BD413 / ADP1) protein is Ribosomal RNA large subunit methyltransferase H.